We begin with the raw amino-acid sequence, 189 residues long: GTP cyclohydrolase 1 (189 aa).

Zn(2+) is bound by residues Cys76, His79, and Cys149.

Belongs to the GTP cyclohydrolase I family. As to quaternary structure, toroid-shaped homodecamer, composed of two pentamers of five dimers.

It carries out the reaction GTP + H2O = 7,8-dihydroneopterin 3'-triphosphate + formate + H(+). It participates in cofactor biosynthesis; 7,8-dihydroneopterin triphosphate biosynthesis; 7,8-dihydroneopterin triphosphate from GTP: step 1/1. This Dehalococcoides mccartyi (strain ATCC BAA-2266 / KCTC 15142 / 195) (Dehalococcoides ethenogenes (strain 195)) protein is GTP cyclohydrolase 1.